A 120-amino-acid chain; its full sequence is Large ribosomal subunit protein uL18 (120 aa).

The protein belongs to the universal ribosomal protein uL18 family. In terms of assembly, part of the 50S ribosomal subunit; part of the 5S rRNA/L5/L18/L25 subcomplex. Contacts the 5S and 23S rRNAs.

In terms of biological role, this is one of the proteins that bind and probably mediate the attachment of the 5S RNA into the large ribosomal subunit, where it forms part of the central protuberance. In Xanthobacter autotrophicus (strain ATCC BAA-1158 / Py2), this protein is Large ribosomal subunit protein uL18.